The sequence spans 162 residues: Caveolin-2 (162 aa).

The Cytoplasmic segment spans residues 1-86 (MGLETEKADV…FEVSKYVIYK (86 aa)). Position 19 is a phosphotyrosine; by SRC (tyrosine 19). Residues serine 20, serine 23, and serine 36 each carry the phosphoserine modification. Residues 87–107 (FLTLLLAMPMAFAAGVLFATL) constitute an intramembrane region (helical). The Cytoplasmic segment spans residues 108 to 162 (SCLHIWIIMPFVKTCLMVLPSVQTIWKSVTDAVIAPLCSSVGRSFSSVSLQVSHD).

Belongs to the caveolin family. Monomer or homodimer. Interacts with CAV1; the interaction forms a stable heterooligomeric complex that is required for targeting to lipid rafts and for caveolae formation. Tyrosine phosphorylated forms do not form heterooligomers with the Tyr-19-phosphorylated form existing as a monomer or dimer. Interacts (tyrosine phosphorylated form) with the SH2 domain-containing proteins, RASA1, NCK1 and SRC. Interacts (tyrosine phosphorylated form) with INSR. Interacts (Tyr-19 phosphorylated form) with MAPK1 (phosphorylated form); the interaction, promoted by insulin, leads to nuclear location and MAPK1 activation. Interacts with STAT3; the interaction is increased on insulin-induced tyrosine phosphorylation leading to STAT activation. Post-translationally, phosphorylated on serine and tyrosine residues. CAV1 promotes phosphorylation on Ser-23 which then targets the complex to the plasma membrane, lipid rafts and caveolae. Phosphorylation on Ser-36 appears to modulate mitosis in endothelial cells. Phosphorylation on Tyr-19 is required for insulin-induced phosphorylation of MAPK1 and DNA binding of STAT3. Tyrosine phosphorylation is induced by both EGF and insulin.

It is found in the nucleus. It localises to the cytoplasm. Its subcellular location is the golgi apparatus membrane. The protein resides in the cell membrane. The protein localises to the membrane. It is found in the caveola. May act as a scaffolding protein within caveolar membranes. Interacts directly with G-protein alpha subunits and can functionally regulate their activity. Acts as an accessory protein in conjunction with CAV1 in targeting to lipid rafts and driving caveolae formation. The Ser-36 phosphorylated form has a role in modulating mitosis in endothelial cells. Positive regulator of cellular mitogenesis of the MAPK signaling pathway. Required for the insulin-stimulated nuclear translocation and activation of MAPK1 and STAT3, and the subsequent regulation of cell cycle progression. This Canis lupus familiaris (Dog) protein is Caveolin-2 (CAV2).